Consider the following 411-residue polypeptide: Indian hedgehog protein (411 aa).

A signal peptide spans 1-27 (MSPARLRPRLHFCLVLLLLLVVPAAWG). Cys28 is lipidated: N-palmitoyl cysteine. Ca(2+) contacts are provided by Glu94, Glu95, Asp100, Thr130, Glu131, Asp134, and Asp136. Zn(2+) contacts are provided by His145, Asp152, and His187. Gly202 is lipidated: Cholesterol glycine ester. N-linked (GlcNAc...) asparagine glycosylation occurs at Asn282.

The protein belongs to the hedgehog family. In terms of assembly, multimer. Interacts with BOC and CDON. Interacts with PTCH1. Interacts with glypican GPC3. Cholesterylation is required for N-product targeting to lipid rafts and multimerization. Post-translationally, the C-terminal domain displays an autoproteolysis activity and a cholesterol transferase activity. Both activities result in the cleavage of the full-length protein and covalent attachment of a cholesterol moiety to the C-terminal of the newly generated N-product. The N-product is the active species in both local and long-range signaling, whereas the C-product is degraded in the endoplasmic reticulum. In terms of processing, N-palmitoylation by HHAT of N-product is required for indian hedgehog protein N-product multimerization and full activity. As to expression, expressed in embryonic lung, and in adult kidney and liver.

It is found in the cell membrane. The protein localises to the endoplasmic reticulum membrane. Its subcellular location is the golgi apparatus membrane. The protein resides in the secreted. It catalyses the reaction glycyl-L-cysteinyl-[protein] + cholesterol + H(+) = [protein]-C-terminal glycyl cholesterol ester + N-terminal L-cysteinyl-[protein]. Its function is as follows. Plays a role in embryonic morphogenesis; it is involved in the regulation of endochondral skeleton formation, and the development of retinal pigment epithelium (RPE), photoreceptors and periocular tissues. In terms of biological role, the C-terminal part of the indian hedgehog protein precursor displays an autoproteolysis and a cholesterol transferase activity. Both activities result in the cleavage of the full-length protein into two parts followed by the covalent attachment of a cholesterol moiety to the C-terminal of the newly generated N-product. Both activities occur in the endoplasmic reticulum. Plays a role in hedgehog paracrine signaling. Associated with the very-low-density lipoprotein (VLDL) particles to function as a circulating morphogen for endothelial cell integrity maintenance. The dually lipidated indian hedgehog protein N-product is a morphogen which is essential for a variety of patterning events during development. Binds to the patched (PTCH1) receptor, which functions in association with smoothened (SMO), to activate the transcription of target genes. Plays a role in morphogenesis of the skeleton by coordinating growth and differentiation of the endochondral skeleton. Positively regulates PTHLH expression during endochondral bone formation preventing chondrocyte hypertrophy. In contrast, participates in normal chondrocyte proliferation in a PTHLH-independent pathway. In Homo sapiens (Human), this protein is Indian hedgehog protein.